We begin with the raw amino-acid sequence, 105 residues long: MKLTPVEQEKLLIFAAGELAKQRKARGVLLNYPEAAAYITCFIMEGARDGKGVAELMEAGRHVLTEKDVMEGVPEMLDSIQVEATFPDGVKLVTVHQPISAEVKS.

It belongs to the urease gamma subunit family. In terms of assembly, heterotrimer of UreA (gamma), UreB (beta) and UreC (alpha) subunits. Three heterotrimers associate to form the active enzyme.

Its subcellular location is the cytoplasm. It catalyses the reaction urea + 2 H2O + H(+) = hydrogencarbonate + 2 NH4(+). It participates in nitrogen metabolism; urea degradation; CO(2) and NH(3) from urea (urease route): step 1/1. In Bacillus subtilis (strain 168), this protein is Urease subunit gamma.